Reading from the N-terminus, the 598-residue chain is MAYRIITLILLLCSTSATAGLFDAPGRSNFVPADQAFAFDFQQQQHDVNLSWQIKDGYYLYRQQFTFSAAGATIDEPALPAGEWHEDEFYGKSEIFRQRLTVPVTVKEADKEATLTVTWQGCADAGFCYPPETKVIPLSAVRAASNDGQATAIEPMPSTSSRPAFNPPLPVEPRPAPELATSPAPAAVPPADTPARLPFTALWALLIGIGIAFTPCVLPMYPLISGIVLGGKQRLSTARALLLAFIYVQGMALTYTALGLVVAAAGLQFQAALQHPYVLVGLSAVFILLALSMFGLFTLQLPSSLQTRLTLLSNKRQGGSPGGVFAMGAIAGLICSPCTTAPLSAILLYIAQSGNLWLGGGTLYLYALGMGLPLILMTVFGNRLLPKSGPWMSHVKTAFGFVILALPVFLLERILGDQWGLRLWSMLGVAFFSWAFITSLGATRPWMRLVQIILLAAALVSARPLQDWAFGAPAVEQQAHLAFTRVSSVAELDQALAQAKGQPVMLDLYADWCVACKEFEKYTFSSPDVQQALKGTVLLQVDVTKNSPQDVALLKHLQVLGLPTILFFNAEGQEQSERRVTGFMDAAAFSAHLRDWQA.

The signal sequence occupies residues 1–19 (MAYRIITLILLLCSTSATA). Cysteine 122 and cysteine 128 are oxidised to a cystine. A disordered region spans residues 147–187 (DGQATAIEPMPSTSSRPAFNPPLPVEPRPAPELATSPAPAA). A compositionally biased stretch (pro residues) spans 165 to 176 (FNPPLPVEPRPA). The next 7 membrane-spanning stretches (helical) occupy residues 197–217 (LPFT…TPCV), 242–262 (LLAF…GLVV), 277–297 (YVLV…FGLF), 330–350 (IAGL…LLYI), 356–376 (LWLG…PLIL), 391–411 (WMSH…VFLL), and 423–443 (LWSM…LGAT). A disulfide bridge connects residues cysteine 216 and cysteine 338. The 140-residue stretch at 459-598 (LVSARPLQDW…FSAHLRDWQA (140 aa)) folds into the Thioredoxin domain. An intrachain disulfide couples cysteine 513 to cysteine 516.

This sequence belongs to the thioredoxin family. DsbD subfamily.

The protein resides in the cell inner membrane. It catalyses the reaction [protein]-dithiol + NAD(+) = [protein]-disulfide + NADH + H(+). The enzyme catalyses [protein]-dithiol + NADP(+) = [protein]-disulfide + NADPH + H(+). Required to facilitate the formation of correct disulfide bonds in some periplasmic proteins and for the assembly of the periplasmic c-type cytochromes. Acts by transferring electrons from cytoplasmic thioredoxin to the periplasm. This transfer involves a cascade of disulfide bond formation and reduction steps. The sequence is that of Thiol:disulfide interchange protein DsbD from Klebsiella pneumoniae subsp. pneumoniae (strain ATCC 700721 / MGH 78578).